The sequence spans 467 residues: Cysteine--tRNA ligase (467 aa).

Residue cysteine 30 participates in Zn(2+) binding. The 'HIGH' region motif lies at 32-42; sequence PTVYNYIHIGN. Zn(2+)-binding residues include cysteine 210, histidine 235, and glutamate 239. A 'KMSKS' region motif is present at residues 267–271; the sequence is KMSKS. Lysine 270 provides a ligand contact to ATP. The residue at position 271 (serine 271) is a Phosphoserine.

Belongs to the class-I aminoacyl-tRNA synthetase family. As to quaternary structure, monomer. It depends on Zn(2+) as a cofactor.

The protein resides in the cytoplasm. It carries out the reaction tRNA(Cys) + L-cysteine + ATP = L-cysteinyl-tRNA(Cys) + AMP + diphosphate. The chain is Cysteine--tRNA ligase from Geobacillus thermodenitrificans (strain NG80-2).